The primary structure comprises 636 residues: MGILNSISTPADLKALNDEDLDALAKEIRTFLVDKVAATGGHLGPNLGVVELTIGLHRVFDSPQDPIIFDTSHQSYVHKILTGRAKDFDSLRQKDGLSGYTCRAESEHDWTESSHASAALSYADGLSKAKQLDGDTTHSVVAVVGDGALTGGMCWEALNNIAAGKDRKVVVVVNDNGRSYSPTIGGFAENLAGLRMQPFYDRFMEKGKTSLKSMGWVGERTFEALHAFKEGVKSTVIPTEMFPELGMKYVGPVDGHNQKAVDNALKYAHDYDGPIIVHMVTEKGRGYAPAEQDLDELMHSTGVIDPLTGAPKSASKPGWTSVFSDELVKIGAQNENVVAITAAMAGPTGLSKFEANFPNRFFDVGIAEQHAVTSAAGLALGGKHPVVAIYSTFLNRAFDQLLMDVGMLNQPVTLVLDRSGVTGSDGASHNGVWDMALTSIVPGVQVAAPRDEDSLRELLNEAISIDDGPTVVRFPKGDLPTPIVAIDTLEDGVDVLAYEDATDVESTDDAPSVLIIAVGERATVALDVASRIKQHGVNVTVVDPRWIVPIPQSLVALSDDHDLVITIEDGVIHGGVGSLLSDALNASEVDTPRRQIAVPQKYLDHASRNEVLADYGLDADGIETTVVGWLDSLFGE.

Thiamine diphosphate contacts are provided by residues His-73 and 114–116; that span reads SHA. Asp-146 contributes to the Mg(2+) binding site. Residues 147-148, Asn-176, Tyr-287, and Glu-368 each bind thiamine diphosphate; that span reads GA. Asn-176 is a binding site for Mg(2+).

This sequence belongs to the transketolase family. DXPS subfamily. Homodimer. Requires Mg(2+) as cofactor. Thiamine diphosphate is required as a cofactor.

It catalyses the reaction D-glyceraldehyde 3-phosphate + pyruvate + H(+) = 1-deoxy-D-xylulose 5-phosphate + CO2. It participates in metabolic intermediate biosynthesis; 1-deoxy-D-xylulose 5-phosphate biosynthesis; 1-deoxy-D-xylulose 5-phosphate from D-glyceraldehyde 3-phosphate and pyruvate: step 1/1. Functionally, catalyzes the acyloin condensation reaction between C atoms 2 and 3 of pyruvate and glyceraldehyde 3-phosphate to yield 1-deoxy-D-xylulose-5-phosphate (DXP). This is 1-deoxy-D-xylulose-5-phosphate synthase from Corynebacterium glutamicum (strain ATCC 13032 / DSM 20300 / JCM 1318 / BCRC 11384 / CCUG 27702 / LMG 3730 / NBRC 12168 / NCIMB 10025 / NRRL B-2784 / 534).